Reading from the N-terminus, the 371-residue chain is Archaeal glycosylation protein Q (371 aa).

The disordered stretch occupies residues 19–39; sequence QRSDGSMPAGHNGPYHDPETP.

The protein resides in the cytoplasm. The protein operates within cell surface structure biogenesis; S-layer biogenesis. In terms of biological role, putative isomerase involved in the N-glycosylation pathway. Required for the appearance of the methyl ester of hexuronic acid found at position four of the pentasaccharide N-linked to the S-layer glycoprotein. Either involved in preparing the third sugar for attachment of the fourth pentasaccharide subunit or processing the fourth sugar prior to its addition to the lipid-linked trisaccharide. The sequence is that of Archaeal glycosylation protein Q (aglQ) from Haloferax volcanii (strain ATCC 29605 / DSM 3757 / JCM 8879 / NBRC 14742 / NCIMB 2012 / VKM B-1768 / DS2) (Halobacterium volcanii).